The sequence spans 309 residues: Tyrosine recombinase XerD (309 aa).

In terms of domain architecture, Core-binding (CB) spans 3-88 (MRASLAIENF…ALRQFFRFLY (86 aa)). Residues 109-302 (PLPKIMSVEN…LEERLHKLVS (194 aa)) form the Tyr recombinase domain. Active-site residues include Arg158, Lys182, His254, Arg257, and His280. Tyr289 functions as the O-(3'-phospho-DNA)-tyrosine intermediate in the catalytic mechanism.

This sequence belongs to the 'phage' integrase family. XerD subfamily. As to quaternary structure, forms a cyclic heterotetrameric complex composed of two molecules of XerC and two molecules of XerD.

Its subcellular location is the cytoplasm. Its function is as follows. Site-specific tyrosine recombinase, which acts by catalyzing the cutting and rejoining of the recombining DNA molecules. The XerC-XerD complex is essential to convert dimers of the bacterial chromosome into monomers to permit their segregation at cell division. It also contributes to the segregational stability of plasmids. This is Tyrosine recombinase XerD from Brucella melitensis biotype 1 (strain ATCC 23456 / CCUG 17765 / NCTC 10094 / 16M).